Consider the following 502-residue polypeptide: Probable cytosol aminopeptidase (502 aa).

Positions 254 and 259 each coordinate Mn(2+). K266 is a catalytic residue. Mn(2+) contacts are provided by D277, D336, and E338. R340 is an active-site residue.

It belongs to the peptidase M17 family. Requires Mn(2+) as cofactor.

Its subcellular location is the cytoplasm. It catalyses the reaction Release of an N-terminal amino acid, Xaa-|-Yaa-, in which Xaa is preferably Leu, but may be other amino acids including Pro although not Arg or Lys, and Yaa may be Pro. Amino acid amides and methyl esters are also readily hydrolyzed, but rates on arylamides are exceedingly low.. It carries out the reaction Release of an N-terminal amino acid, preferentially leucine, but not glutamic or aspartic acids.. Functionally, presumably involved in the processing and regular turnover of intracellular proteins. Catalyzes the removal of unsubstituted N-terminal amino acids from various peptides. This chain is Probable cytosol aminopeptidase, found in Tropheryma whipplei (strain TW08/27) (Whipple's bacillus).